The following is a 454-amino-acid chain: MQLYSSVCTHYPAGTPGPTAAAPPATAAAAFKVSLQSASPAAAAPEPDTGERPPAAATEPREAAAAAAMPAFSACFERSGSAAAPPGACSKPPLPPHFTSTAHIAVRALGAERLLLPPPSAPSPPRRGSSAWLLEELLRPDEPAAPNAVRDAPDRNFRLSEHRQALAASQHRAPAPAPVGPEPGAGPGSGPWGEERRAERSSRGWDRASGRSDASGSDALRRQDPEAEAHPVPAPARSSGEPAQNGEGEAVGTSRADPRDEKLALYLAEVERQDKYLRQRNKYRFHIIPDGNCLYRAVSKTVYGDQSLHRELREQTVHYIADHLDHFSPLIEGDVGEFIIAAAQDGAWAGYPELLAMGQMLNVNIHLTTGGRLESPTVSTMIHYLGPEDSLRPSIWLSWLSNGHYDAVFDHSYPNPEYDNWCKQTQIQKKRDEELAKSMAISLSKMYIEQNACS.

Disordered regions lie at residues 36-64 (QSAS…REAA) and 116-257 (LPPP…SRAD). A compositionally biased stretch (low complexity) spans 52 to 64 (RPPAAATEPREAA). Residues 116–125 (LPPPSAPSPP) show a composition bias toward pro residues. 3 stretches are compositionally biased toward basic and acidic residues: residues 151–164 (DAPD…EHRQ), 193–210 (GEER…RASG), and 219–229 (ALRRQDPEAEA). The region spanning 282–411 (KYRFHIIPDG…NGHYDAVFDH (130 aa)) is the OTU domain. The cys-loop stretch occupies residues 287 to 293 (IIPDGNC). The active site involves Asp290. Residue Cys293 is the Nucleophile of the active site. The interval 342–352 (AAQDGAWAGYP) is his-loop. The interval 399-404 (WLSNGH) is variable-loop. His404 is an active-site residue. Residues 430–449 (KRDEELAKSMAISLSKMYIE) enclose the UIM domain.

The enzyme catalyses Thiol-dependent hydrolysis of ester, thioester, amide, peptide and isopeptide bonds formed by the C-terminal Gly of ubiquitin (a 76-residue protein attached to proteins as an intracellular targeting signal).. Deubiquitinating enzyme that specifically hydrolyzes 'Lys-63'-linked polyubiquitin to monoubiquitin. Required for the stability and translation of a subset mRNAs with a high abundance of rare codons by mediating deubiquitination of 40S ribosomal protein RPS10/eS10, thereby antagonizing ZNF598-mediated 40S ubiquitination. The abundance of rare codons in mRNAs can limit the translation rate and can lead to ribosome collisions that trigger activation of ribosome quality control (RQC) pathway by ZNF598. OTUD1-mediated deubiquitination prevents activation of the RQC and subsequent dissociation of ribosomes and stimulates formation of polysomes and translation. The protein is OTU domain-containing protein 1 (Otud1) of Mus musculus (Mouse).